The following is a 504-amino-acid chain: Maturase K (504 aa).

The protein belongs to the intron maturase 2 family. MatK subfamily.

It is found in the plastid. It localises to the chloroplast. Usually encoded in the trnK tRNA gene intron. Probably assists in splicing its own and other chloroplast group II introns. This Taxus baccata (English yew) protein is Maturase K.